The following is a 153-amino-acid chain: Ribosome maturation factor RimP (153 aa).

It belongs to the RimP family.

It localises to the cytoplasm. Required for maturation of 30S ribosomal subunits. The chain is Ribosome maturation factor RimP from Clostridium botulinum (strain Loch Maree / Type A3).